Here is a 441-residue protein sequence, read N- to C-terminus: Interferon-related developmental regulator 2 (441 aa).

A compositionally biased stretch (basic residues) spans 1-15 (MPRARKGNALRKGGQ). Residues 1-51 (MPRARKGNALRKGGQRRGGGARSSTQADSGSSEDEAASEARSTTSDCPSLL) are disordered.

The protein belongs to the IFRD family. Associates with ribosomes; promoting ribosome inactivation.

In terms of biological role, ribosome-binding protein that acts as an inhibitor of mRNA translation by promoting ribosome inactivation. Associates with the P- and E-sites of the ribosome and inserts a C-terminal helix into the mRNA exit channel to preclude translation. This Mus musculus (Mouse) protein is Interferon-related developmental regulator 2.